Consider the following 337-residue polypeptide: Thymidylate synthase (337 aa).

DUMP is bound by residues R74 and 199–200 (RR). C219 (nucleophile) is an active-site residue. Residues 239–242 (RSGD), N250, and 280–282 (HIY) contribute to the dUMP site. D242 contacts (6R)-5,10-methylene-5,6,7,8-tetrahydrofolate. A (6R)-5,10-methylene-5,6,7,8-tetrahydrofolate-binding site is contributed by A336.

This sequence belongs to the thymidylate synthase family. In terms of assembly, homodimer.

It catalyses the reaction dUMP + (6R)-5,10-methylene-5,6,7,8-tetrahydrofolate = 7,8-dihydrofolate + dTMP. The protein operates within pyrimidine metabolism; dTTP biosynthesis. In Homo sapiens (Human), this protein is Thymidylate synthase (70).